The sequence spans 301 residues: Tetrahydromethanopterin S-methyltransferase subunit E (301 aa).

A run of 5 helical transmembrane segments spans residues 85–105 (VIFA…TYCI), 130–150 (HTPV…VVSY), 151–171 (IMVA…IWGI), 232–252 (PVTG…TAVF), and 258–278 (LTMG…LIIW).

This sequence belongs to the MtrE family. The complex is composed of 8 subunits; MtrA, MtrB, MtrC, MtrD, MtrE, MtrF, MtrG and MtrH.

The protein localises to the cell membrane. It carries out the reaction 5-methyl-5,6,7,8-tetrahydromethanopterin + coenzyme M + 2 Na(+)(in) = 5,6,7,8-tetrahydromethanopterin + methyl-coenzyme M + 2 Na(+)(out). In terms of biological role, part of a complex that catalyzes the formation of methyl-coenzyme M and tetrahydromethanopterin from coenzyme M and methyl-tetrahydromethanopterin. This is an energy-conserving, sodium-ion translocating step. This chain is Tetrahydromethanopterin S-methyltransferase subunit E, found in Methanococcoides burtonii (strain DSM 6242 / NBRC 107633 / OCM 468 / ACE-M).